A 360-amino-acid polypeptide reads, in one-letter code: Peptide chain release factor 1 (360 aa).

Position 233 is an N5-methylglutamine (Gln233). The interval 286-305 is disordered; the sequence is NEIAQERKSQVGTGDRSERI.

It belongs to the prokaryotic/mitochondrial release factor family. Methylated by PrmC. Methylation increases the termination efficiency of RF1.

The protein localises to the cytoplasm. In terms of biological role, peptide chain release factor 1 directs the termination of translation in response to the peptide chain termination codons UAG and UAA. The protein is Peptide chain release factor 1 of Acetivibrio thermocellus (strain ATCC 27405 / DSM 1237 / JCM 9322 / NBRC 103400 / NCIMB 10682 / NRRL B-4536 / VPI 7372) (Clostridium thermocellum).